The following is a 380-amino-acid chain: MLRRKPSNASEKEPTQKKKLSLQRSSSFKDFAKSKPSSPVVSEKEFNLDDNIPEDDSGVPTPEDAGKSGKKLGKKWRAVISRTMNRKMGKMMVKALSEEMADTLEEGSASPTSPDYSLDSPGPEKMALAFSEQEEHELPVLSRQASTGSELCSPSPGSGSFGEEPPAPQYTGPFCGRARVHTDFTPSPYDHDSLKLQKGDVIQIIEKPPVGTWLGLLNGKVGSFKFIYVDVLPEEAVGHARPSRRQSKGKRPKPKTLHELLERIGLEEHTSTLLLNGYQTLEDFKELRETHLNELNIMDPQHRAKLLTAAELLLDYDTGSEEAEEGAESSQEPVAHTVSEPKVDIPRDSGCFEGSESGRDDAELAGTEEQLQGLSLAGAP.

The tract at residues 1 to 76 is disordered; sequence MLRRKPSNAS…KSGKKLGKKW (76 aa). A compositionally biased stretch (low complexity) spans 22–41; the sequence is LQRSSSFKDFAKSKPSSPVV. Phosphoserine occurs at positions 27, 34, and 42. Thr-61 carries the phosphothreonine modification. Ser-97 bears the Phosphoserine mark. Disordered regions lie at residues 98-174, 237-256, and 318-380; these read EEMA…TGPF, VGHARPSRRQSKGKRPKPKT, and TGSE…AGAP. At Thr-103 the chain carries Phosphothreonine. Phosphoserine is present on Ser-110. Thr-112 is subject to Phosphothreonine. The residue at position 113 (Ser-113) is a Phosphoserine. Tyr-116 bears the Phosphotyrosine mark. Position 120 is a phosphoserine (Ser-120). Residues 143 to 152 show a composition bias toward polar residues; the sequence is RQASTGSELC. Residues 153–164 are compositionally biased toward low complexity; it reads SPSPGSGSFGEE. An SH3 domain is found at 173–234; that stretch reads PFCGRARVHT…KFIYVDVLPE (62 aa). The span at 241-255 shows a compositional bias: basic residues; sequence RPSRRQSKGKRPKPK. The region spanning 252–316 is the SAM domain; it reads PKPKTLHELL…LTAAELLLDY (65 aa). A Phosphothreonine modification is found at Thr-318. The span at 318–327 shows a compositional bias: acidic residues; it reads TGSEEAEEGA. Ser-320 is modified (phosphoserine).

Its function is as follows. May function as a signaling adapter protein in lymphocytes. The polypeptide is SAM and SH3 domain-containing protein 3 (SASH3) (Homo sapiens (Human)).